A 177-amino-acid chain; its full sequence is Nicotinamide-nucleotide adenylyltransferase (177 aa).

The protein belongs to the archaeal NMN adenylyltransferase family.

The protein localises to the cytoplasm. The enzyme catalyses beta-nicotinamide D-ribonucleotide + ATP + H(+) = diphosphate + NAD(+). It participates in cofactor biosynthesis; NAD(+) biosynthesis; NAD(+) from nicotinamide D-ribonucleotide: step 1/1. The chain is Nicotinamide-nucleotide adenylyltransferase from Halobacterium salinarum (strain ATCC 29341 / DSM 671 / R1).